The sequence spans 426 residues: Enolase (426 aa).

Gln163 contacts (2R)-2-phosphoglycerate. Catalysis depends on Glu205, which acts as the Proton donor. Residues Asp242, Glu285, and Asp312 each contribute to the Mg(2+) site. Positions 337, 366, 367, and 388 each coordinate (2R)-2-phosphoglycerate. The Proton acceptor role is filled by Lys337.

Belongs to the enolase family. It depends on Mg(2+) as a cofactor.

The protein resides in the cytoplasm. It localises to the secreted. Its subcellular location is the cell surface. The enzyme catalyses (2R)-2-phosphoglycerate = phosphoenolpyruvate + H2O. It participates in carbohydrate degradation; glycolysis; pyruvate from D-glyceraldehyde 3-phosphate: step 4/5. Its function is as follows. Catalyzes the reversible conversion of 2-phosphoglycerate (2-PG) into phosphoenolpyruvate (PEP). It is essential for the degradation of carbohydrates via glycolysis. The chain is Enolase from Caulobacter vibrioides (strain ATCC 19089 / CIP 103742 / CB 15) (Caulobacter crescentus).